The primary structure comprises 396 residues: Arginine biosynthesis bifunctional protein ArgJ (396 aa).

6 residues coordinate substrate: T150, K177, T188, E267, N391, and T396. The active-site Nucleophile is T188.

It belongs to the ArgJ family. In terms of assembly, heterotetramer of two alpha and two beta chains.

The protein localises to the cytoplasm. The enzyme catalyses N(2)-acetyl-L-ornithine + L-glutamate = N-acetyl-L-glutamate + L-ornithine. It catalyses the reaction L-glutamate + acetyl-CoA = N-acetyl-L-glutamate + CoA + H(+). Its pathway is amino-acid biosynthesis; L-arginine biosynthesis; L-ornithine and N-acetyl-L-glutamate from L-glutamate and N(2)-acetyl-L-ornithine (cyclic): step 1/1. It functions in the pathway amino-acid biosynthesis; L-arginine biosynthesis; N(2)-acetyl-L-ornithine from L-glutamate: step 1/4. Functionally, catalyzes two activities which are involved in the cyclic version of arginine biosynthesis: the synthesis of N-acetylglutamate from glutamate and acetyl-CoA as the acetyl donor, and of ornithine by transacetylation between N(2)-acetylornithine and glutamate. The sequence is that of Arginine biosynthesis bifunctional protein ArgJ from Wolinella succinogenes (strain ATCC 29543 / DSM 1740 / CCUG 13145 / JCM 31913 / LMG 7466 / NCTC 11488 / FDC 602W) (Vibrio succinogenes).